The sequence spans 324 residues: Zinc transporter ZIP1 (324 aa).

Residues 1–30 are Extracellular-facing; that stretch reads MGPWGEPELLVWRPEAVASEPPVPVGLEVK. Residues 31–51 traverse the membrane as a helical segment; sequence LGALVLLLVLTLLCSLVPICV. Over 52 to 68 the chain is Cytoplasmic; it reads LRRPGANHEGSASRQKA. Residues 69–89 form a helical membrane-spanning segment; sequence LSLVSCFAGGVFLATCLLDLL. At 90-104 the chain is on the extracellular side; sequence PDYLAAIDEALAALH. A helical transmembrane segment spans residues 105 to 125; sequence VTLQFPLQEFILAMGFFLVLV. The Cytoplasmic segment spans residues 126–179; the sequence is MEQITLAYKEQSGPSPLEETRALLGTVNGGPQHWHDGPGVPQASGAPATPSALR. The chain crosses the membrane as a helical span at residues 180–200; sequence ACVLVFSLALHSVFEGLAVGL. Over 201 to 206 the chain is Extracellular; it reads QRDRAR. A helical membrane pass occupies residues 207-227; it reads AMELCLALLLHKGILAVSLSL. Topologically, residues 228 to 237 are cytoplasmic; that stretch reads RLLQSHLRAQ. Residues 238-258 traverse the membrane as a helical segment; it reads VVAGCGILFSCMTPLGIGLGA. Residues 259 to 272 are Extracellular-facing; the sequence is ALAESAGPLHQLAQ. A helical membrane pass occupies residues 273 to 293; it reads SVLEGMAAGTFLYITFLEILP. The Cytoplasmic portion of the chain corresponds to 294-303; the sequence is QELASSEQRI. The chain crosses the membrane as a helical span at residues 304–324; the sequence is LKVILLLAGFALLTGLLFIQI.

Belongs to the ZIP transporter (TC 2.A.5) family. As to expression, ubiquitous. Expressed in most adult and fetal tissues including the epidermis.

It is found in the cell membrane. Its subcellular location is the endoplasmic reticulum membrane. It carries out the reaction Zn(2+)(in) = Zn(2+)(out). Inhibited by Ni(2+) ions. Fe(2+) ions do not inhibit zinc uptake. Transporter for the divalent cation Zn(2+). Mediates the influx of Zn(2+) into cells from extracellular space. Functions as the major importer of zinc from circulating blood plasma into prostate cells. The sequence is that of Zinc transporter ZIP1 from Homo sapiens (Human).